Consider the following 750-residue polypeptide: Tyrosine-protein phosphatase 2 (750 aa).

The interval 1 to 20 (MDRIAQQYRNGKRDNNGNRM) is disordered. A Phosphoserine modification is found at Ser258. Disordered regions lie at residues 327–348 (LHQK…SKLY) and 425–450 (VKLP…DKSY). A compositionally biased stretch (polar residues) spans 330 to 348 (KQLSQKQRGPQSTDDSKLY). The 355-residue stretch at 383–737 (SPSPLSSDDT…IACYEALLNY (355 aa)) folds into the Tyrosine-protein phosphatase domain. The residue at position 430 (Ser430) is a Phosphoserine. Residue Cys666 is the Phosphocysteine intermediate of the active site.

This sequence belongs to the protein-tyrosine phosphatase family. Non-receptor class subfamily. Interacts with HOG1.

It is found in the cytoplasm. The protein localises to the nucleus. It catalyses the reaction O-phospho-L-tyrosyl-[protein] + H2O = L-tyrosyl-[protein] + phosphate. Major phosphatase responsible with PTP3 for tyrosine dephosphorylation of MAP kinase HOG1 to inactivate its activity. May also be involved in the regulation of MAP kinase FUS3. May be implicated in the ubiquitin-mediated protein degradation. The protein is Tyrosine-protein phosphatase 2 (PTP2) of Saccharomyces cerevisiae (strain ATCC 204508 / S288c) (Baker's yeast).